Consider the following 1026-residue polypeptide: Multidrug resistance protein MdtC (1026 aa).

11 consecutive transmembrane segments (helical) span residues 15–35 (ILIA…LPVA), 333–353 (EVEE…FLFL), 360–380 (LIPA…MYLC), 387–407 (LSLM…IVVL), 431–451 (VGFT…PLLL), 463–483 (FAVT…TLTP), 528–548 (LVGV…IAIP), 853–873 (LILI…LYES), 897–917 (LFNA…IGIV), 953–973 (PIMM…LSGG), and 984–1004 (ITIV…TPVV).

The protein belongs to the resistance-nodulation-cell division (RND) (TC 2.A.6) family. MdtC subfamily. Part of a tripartite efflux system composed of MdtA, MdtB and MdtC. MdtC forms a heteromultimer with MdtB.

Its subcellular location is the cell inner membrane. The sequence is that of Multidrug resistance protein MdtC from Salmonella choleraesuis (strain SC-B67).